Reading from the N-terminus, the 344-residue chain is GTPase Obg (344 aa).

Residues 1–159 (MKFLDEAKVY…MWLILRLKLI (159 aa)) enclose the Obg domain. Residues 160 to 327 (ADAGLVGLPN…ALRAIQAQLD (168 aa)) enclose the OBG-type G domain. Residues 166 to 173 (GLPNAGKS), 191 to 195 (FTTLH), 212 to 215 (DIPG), 279 to 282 (SKAD), and 308 to 310 (SAA) each bind GTP. Residues Ser173 and Thr193 each coordinate Mg(2+).

Belongs to the TRAFAC class OBG-HflX-like GTPase superfamily. OBG GTPase family. As to quaternary structure, monomer. Mg(2+) is required as a cofactor.

It localises to the cytoplasm. Its function is as follows. An essential GTPase which binds GTP, GDP and possibly (p)ppGpp with moderate affinity, with high nucleotide exchange rates and a fairly low GTP hydrolysis rate. Plays a role in control of the cell cycle, stress response, ribosome biogenesis and in those bacteria that undergo differentiation, in morphogenesis control. In Methylorubrum extorquens (strain CM4 / NCIMB 13688) (Methylobacterium extorquens), this protein is GTPase Obg.